The chain runs to 135 residues: Ribosome-binding factor A (135 aa).

The protein belongs to the RbfA family. As to quaternary structure, monomer. Binds 30S ribosomal subunits, but not 50S ribosomal subunits or 70S ribosomes.

It is found in the cytoplasm. In terms of biological role, one of several proteins that assist in the late maturation steps of the functional core of the 30S ribosomal subunit. Associates with free 30S ribosomal subunits (but not with 30S subunits that are part of 70S ribosomes or polysomes). Required for efficient processing of 16S rRNA. May interact with the 5'-terminal helix region of 16S rRNA. This is Ribosome-binding factor A from Caldicellulosiruptor saccharolyticus (strain ATCC 43494 / DSM 8903 / Tp8T 6331).